The sequence spans 388 residues: Chorismate synthase (388 aa).

2 residues coordinate NADP(+): R39 and R45. Residues 130–132, 251–252, G296, 311–315, and R337 each bind FMN; these read RSS, NA, and KPIPT.

It belongs to the chorismate synthase family. In terms of assembly, homotetramer. FMNH2 is required as a cofactor.

It carries out the reaction 5-O-(1-carboxyvinyl)-3-phosphoshikimate = chorismate + phosphate. It participates in metabolic intermediate biosynthesis; chorismate biosynthesis; chorismate from D-erythrose 4-phosphate and phosphoenolpyruvate: step 7/7. In terms of biological role, catalyzes the anti-1,4-elimination of the C-3 phosphate and the C-6 proR hydrogen from 5-enolpyruvylshikimate-3-phosphate (EPSP) to yield chorismate, which is the branch point compound that serves as the starting substrate for the three terminal pathways of aromatic amino acid biosynthesis. This reaction introduces a second double bond into the aromatic ring system. The sequence is that of Chorismate synthase from Geobacillus kaustophilus (strain HTA426).